A 200-amino-acid polypeptide reads, in one-letter code: Dephospho-CoA kinase (200 aa).

One can recognise a DPCK domain in the interval Val3–Ser200. ATP is bound at residue Gly11–Ser16.

The protein belongs to the CoaE family.

Its subcellular location is the cytoplasm. It catalyses the reaction 3'-dephospho-CoA + ATP = ADP + CoA + H(+). The protein operates within cofactor biosynthesis; coenzyme A biosynthesis; CoA from (R)-pantothenate: step 5/5. Catalyzes the phosphorylation of the 3'-hydroxyl group of dephosphocoenzyme A to form coenzyme A. This Nitrosospira multiformis (strain ATCC 25196 / NCIMB 11849 / C 71) protein is Dephospho-CoA kinase.